Here is a 147-residue protein sequence, read N- to C-terminus: SsrA-binding protein (147 aa).

This sequence belongs to the SmpB family.

It localises to the cytoplasm. Its function is as follows. Required for rescue of stalled ribosomes mediated by trans-translation. Binds to transfer-messenger RNA (tmRNA), required for stable association of tmRNA with ribosomes. tmRNA and SmpB together mimic tRNA shape, replacing the anticodon stem-loop with SmpB. tmRNA is encoded by the ssrA gene; the 2 termini fold to resemble tRNA(Ala) and it encodes a 'tag peptide', a short internal open reading frame. During trans-translation Ala-aminoacylated tmRNA acts like a tRNA, entering the A-site of stalled ribosomes, displacing the stalled mRNA. The ribosome then switches to translate the ORF on the tmRNA; the nascent peptide is terminated with the 'tag peptide' encoded by the tmRNA and targeted for degradation. The ribosome is freed to recommence translation, which seems to be the essential function of trans-translation. This Mycoplasmopsis fermentans (strain ATCC 19989 / NBRC 14854 / NCTC 10117 / PG18) (Mycoplasma fermentans) protein is SsrA-binding protein.